The chain runs to 204 residues: Large ribosomal subunit protein eL15 (204 aa).

The tract at residues 161 to 180 (MRGLTSAGKKSRGLGKGHKF) is disordered. Over residues 169–180 (KKSRGLGKGHKF) the composition is skewed to basic residues.

Belongs to the eukaryotic ribosomal protein eL15 family. In terms of assembly, component of the large ribosomal subunit.

The protein resides in the cytoplasm. In terms of biological role, component of the large ribosomal subunit. The ribosome is a large ribonucleoprotein complex responsible for the synthesis of proteins in the cell. This Ictalurus punctatus (Channel catfish) protein is Large ribosomal subunit protein eL15 (rpl15).